The primary structure comprises 200 residues: Protein GrpE (200 aa).

Polar residues predominate over residues 1 to 11 (MSNQTNKAQDN). Residues 1–25 (MSNQTNKAQDNQVEEIVEGELLNEN) are disordered.

It belongs to the GrpE family. As to quaternary structure, homodimer.

It is found in the cytoplasm. In terms of biological role, participates actively in the response to hyperosmotic and heat shock by preventing the aggregation of stress-denatured proteins, in association with DnaK and GrpE. It is the nucleotide exchange factor for DnaK and may function as a thermosensor. Unfolded proteins bind initially to DnaJ; upon interaction with the DnaJ-bound protein, DnaK hydrolyzes its bound ATP, resulting in the formation of a stable complex. GrpE releases ADP from DnaK; ATP binding to DnaK triggers the release of the substrate protein, thus completing the reaction cycle. Several rounds of ATP-dependent interactions between DnaJ, DnaK and GrpE are required for fully efficient folding. The sequence is that of Protein GrpE from Shewanella pealeana (strain ATCC 700345 / ANG-SQ1).